A 318-amino-acid chain; its full sequence is Putative 2-hydroxyacid dehydrogenase SH0752 (318 aa).

NAD(+)-binding positions include 155–156 (EI), 234–236 (AGR), and D260. Residue R236 is part of the active site. The active site involves E265. Residue H283 is the Proton donor of the active site. 283-286 (HIGN) is a binding site for NAD(+).

It belongs to the D-isomer specific 2-hydroxyacid dehydrogenase family.

This chain is Putative 2-hydroxyacid dehydrogenase SH0752, found in Staphylococcus haemolyticus (strain JCSC1435).